The following is a 166-amino-acid chain: Ribosome maturation factor RimM (166 aa).

The PRC barrel domain maps to 90–163 (EGQYFIKDII…KIVIKAVEEW (74 aa)).

This sequence belongs to the RimM family. In terms of assembly, binds ribosomal protein uS19.

It localises to the cytoplasm. Functionally, an accessory protein needed during the final step in the assembly of 30S ribosomal subunit, possibly for assembly of the head region. Essential for efficient processing of 16S rRNA. May be needed both before and after RbfA during the maturation of 16S rRNA. It has affinity for free ribosomal 30S subunits but not for 70S ribosomes. The sequence is that of Ribosome maturation factor RimM from Clostridium acetobutylicum (strain ATCC 824 / DSM 792 / JCM 1419 / IAM 19013 / LMG 5710 / NBRC 13948 / NRRL B-527 / VKM B-1787 / 2291 / W).